The chain runs to 63 residues: Large ribosomal subunit protein bL33 (63 aa).

The protein belongs to the bacterial ribosomal protein bL33 family.

The polypeptide is Large ribosomal subunit protein bL33 (Gloeobacter violaceus (strain ATCC 29082 / PCC 7421)).